The chain runs to 589 residues: Vesicular glutamate transporter 3 (589 aa).

The Cytoplasmic segment spans residues M1 to Y76. Residues T40–N49 are compositionally biased toward acidic residues. The segment at T40–S61 is disordered. The chain crosses the membrane as a helical span at residues I77–G97. The Vesicular segment spans residues V98–G130. A glycan (N-linked (GlcNAc...) asparagine) is linked at N106. A helical membrane pass occupies residues L131–S151. Residues N152–K153 lie on the Cytoplasmic side of the membrane. A helical membrane pass occupies residues F154–I174. The Vesicular portion of the chain corresponds to P175–Y182. The chain crosses the membrane as a helical span at residues G183–C203. At H204 to T221 the chain is on the cytoplasmic side. A helical transmembrane segment spans residues T222 to V242. The Vesicular segment spans residues Q243 to S249. Residues V250 to Y270 traverse the membrane as a helical segment. Residues E271–L314 lie on the Cytoplasmic side of the membrane. A helical membrane pass occupies residues P315–I335. The Vesicular segment spans residues S336–G353. A helical transmembrane segment spans residues L354–A374. At D375–K390 the chain is on the cytoplasmic side. A helical transmembrane segment spans residues I391–H411. Topologically, residues T412–K413 are vesicular. The chain crosses the membrane as a helical span at residues G414 to F434. The Cytoplasmic segment spans residues N435–S447. The helical transmembrane segment at I448–V468 threads the bilayer. The Vesicular segment spans residues G469–Q481. A helical membrane pass occupies residues N482–A502. The Cytoplasmic segment spans residues S503–S586. Residues K559–S589 are disordered. Positions N580–S589 are enriched in basic and acidic residues.

It belongs to the major facilitator superfamily. Sodium/anion cotransporter family. VGLUT subfamily. As to expression, expressed in amygdala, cerebellum, hippocampus, medulla, spinal cord and thalamus.

Its subcellular location is the cytoplasmic vesicle. The protein resides in the secretory vesicle. It is found in the synaptic vesicle membrane. It localises to the cell membrane. The protein localises to the synapse. Its subcellular location is the synaptosome. It carries out the reaction L-glutamate(out) = L-glutamate(in). The enzyme catalyses 3 Na(+)(out) + phosphate(out) = 3 Na(+)(in) + phosphate(in). The catalysed reaction is chloride(in) = chloride(out). The L-glutamate uniporter activity exhibits a biphasic dependence on chloride concentration. Chloride channel activity is allosterically activated by lumenal H(+) and Cl(-) leading to synaptic vesicles acidification. The glutamate transport activity is allosterically activated by lumenal H(+) and Cl(-), preventing non-vesicular L-glutamate release. Its function is as follows. Multifunctional transporter that transports L-glutamate as well as multiple ions such as chloride, sodium and phosphate. At the synaptic vesicle membrane, mainly functions as an uniporter that mediates the uptake of L-glutamate into synaptic vesicles at presynaptic nerve terminals of excitatory neural cells. The L-glutamate uniporter activity is electrogenic and is driven by the proton electrochemical gradient, mainly by the electrical gradient established by the vacuolar H(+)-ATPase across the synaptic vesicle membrane. In addition, functions as a chloride channel that allows a chloride permeation through the synaptic vesicle membrane that affects the proton electrochemical gradient and promotes synaptic vesicles acidification. At the plasma membrane, following exocytosis, functions as a symporter of Na(+) and phosphate from the extracellular space to the cytoplasm allowing synaptic phosphate homeostasis regulation. The symporter activity is electrogenic. Moreover, operates synergistically with SLC18A3/VACHT under a constant H(+) gradient, thereby allowing striatal vesicular acetylcholine uptake. The protein is Vesicular glutamate transporter 3 of Homo sapiens (Human).